The primary structure comprises 43 residues: Protein PsbN (43 aa).

A helical transmembrane segment spans residues 5 to 27 (TIFSIFFSCLLIGLTGYSLYTSF).

This sequence belongs to the PsbN family.

It is found in the plastid. The protein resides in the chloroplast thylakoid membrane. May play a role in photosystem I and II biogenesis. In Mesostigma viride (Green alga), this protein is Protein PsbN.